We begin with the raw amino-acid sequence, 174 residues long: FMN reductase (NADH) SmoA (174 aa).

Belongs to the non-flavoprotein flavin reductase family.

The catalysed reaction is FMNH2 + NAD(+) = FMN + NADH + 2 H(+). Functionally, part of the sulfoquinovose monooxygenase (sulfo-SMO) pathway, a D-sulfoquinovose degradation pathway that enables the complete utilization of all carbons within sulfoquinovose (SQ) with concomitant production of inorganic sulfite. Catalyzes the NADH-dependent reduction of FMN. FMNH(2) is then transferred to the sulfoquinovose monooxygenase SmoC. This Agrobacterium fabrum (strain C58 / ATCC 33970) (Agrobacterium tumefaciens (strain C58)) protein is FMN reductase (NADH) SmoA.